Reading from the N-terminus, the 178-residue chain is MFIKYAEVLNLVKNILKSMVGEALIGSGPEVAHIDLVIGPRGGSVEAAFMNSLAMPRQGHTPLLAVLEPNIQPKPTTLIVNKVTIKNVSQAALMFGPAQAAVAKAVMDSVADGVLPEEQADDIFIIVSVFIEWDAKDKDKVYEFNYEATKLAIARAMEGRPTVEEALAKKDSANHPFA.

H33 acts as the Proton donor in catalysis. Substrate is bound by residues D35, L64, K82, T84, and Q99.

Belongs to the formaldehyde-activating enzyme family.

It localises to the cytoplasm. The catalysed reaction is 5,6,7,8-tetrahydromethanopterin + formaldehyde = 5,10-methylenetetrahydromethanopterin + H2O. Functionally, catalyzes the condensation of formaldehyde with tetrahydromethanopterin (H(4)MPT) to 5,10-methylenetetrahydromethanopterin. This chain is 5,6,7,8-tetrahydromethanopterin hydro-lyase (faeA), found in Methanosarcina barkeri (strain Fusaro / DSM 804).